The primary structure comprises 391 residues: Homoserine O-acetyltransferase (391 aa).

Positions 50–360 (NAILICHALT…DKGHDAFLLD (311 aa)) constitute an AB hydrolase-1 domain. Serine 155 (nucleophile) is an active-site residue. A substrate-binding site is contributed by arginine 225. Residues aspartate 321 and histidine 354 contribute to the active site. Substrate is bound at residue aspartate 355.

Belongs to the AB hydrolase superfamily. MetX family. In terms of assembly, homodimer.

Its subcellular location is the cytoplasm. The enzyme catalyses L-homoserine + acetyl-CoA = O-acetyl-L-homoserine + CoA. It functions in the pathway amino-acid biosynthesis; L-methionine biosynthesis via de novo pathway; O-acetyl-L-homoserine from L-homoserine: step 1/1. Functionally, transfers an acetyl group from acetyl-CoA to L-homoserine, forming acetyl-L-homoserine. This is Homoserine O-acetyltransferase from Rhodospirillum rubrum (strain ATCC 11170 / ATH 1.1.1 / DSM 467 / LMG 4362 / NCIMB 8255 / S1).